Here is a 128-residue protein sequence, read N- to C-terminus: Holo-[acyl-carrier-protein] synthase (128 aa).

Residues Asp-9 and Glu-60 each contribute to the Mg(2+) site.

It belongs to the P-Pant transferase superfamily. AcpS family. Mg(2+) is required as a cofactor.

The protein resides in the cytoplasm. It catalyses the reaction apo-[ACP] + CoA = holo-[ACP] + adenosine 3',5'-bisphosphate + H(+). Functionally, transfers the 4'-phosphopantetheine moiety from coenzyme A to a Ser of acyl-carrier-protein. This Buchnera aphidicola subsp. Baizongia pistaciae (strain Bp) protein is Holo-[acyl-carrier-protein] synthase.